Consider the following 603-residue polypeptide: Phosphomethylpyrimidine synthase (603 aa).

Substrate is bound by residues Asn224, Met253, Tyr282, His318, 338–340 (SRG), 379–382 (DGLR), and Glu418. His422 lines the Zn(2+) pocket. Position 445 (Tyr445) interacts with substrate. Residue His486 coordinates Zn(2+). [4Fe-4S] cluster is bound by residues Cys566, Cys569, and Cys574.

Belongs to the ThiC family. In terms of assembly, homodimer. The cofactor is [4Fe-4S] cluster.

It carries out the reaction 5-amino-1-(5-phospho-beta-D-ribosyl)imidazole + S-adenosyl-L-methionine = 4-amino-2-methyl-5-(phosphooxymethyl)pyrimidine + CO + 5'-deoxyadenosine + formate + L-methionine + 3 H(+). It participates in cofactor biosynthesis; thiamine diphosphate biosynthesis. Functionally, catalyzes the synthesis of the hydroxymethylpyrimidine phosphate (HMP-P) moiety of thiamine from aminoimidazole ribotide (AIR) in a radical S-adenosyl-L-methionine (SAM)-dependent reaction. In Xylella fastidiosa (strain Temecula1 / ATCC 700964), this protein is Phosphomethylpyrimidine synthase.